The primary structure comprises 564 residues: Dihydropyrimidinase-related protein 5 (564 aa).

Residues Thr-509 and Thr-514 each carry the phosphothreonine modification. Residues Ser-532 and Ser-538 each carry the phosphoserine modification. Arg-559 carries the omega-N-methylarginine modification.

Belongs to the metallo-dependent hydrolases superfamily. Hydantoinase/dihydropyrimidinase family. As to quaternary structure, homotetramer, and heterotetramer with other DPYS-like proteins. Interacts with DPYSL2, DPYSL3 and DPYSL4. Interacts with SEPTIN4 isoform 4. Interacts with MAP2 and TUBB3. As to expression, detected in brain.

Its subcellular location is the cytoplasm. Involved in the negative regulation of dendrite outgrowth. This chain is Dihydropyrimidinase-related protein 5 (Dpysl5), found in Mus musculus (Mouse).